A 444-amino-acid chain; its full sequence is ATP-dependent protease ATPase subunit HslU (444 aa).

Residues I18 and 60–65 (GVGKTE) each bind ATP. The tract at residues 143-163 (WGEVENHDSHSSTRQAFRKKL) is disordered. ATP is bound by residues D257, E322, and R394.

The protein belongs to the ClpX chaperone family. HslU subfamily. In terms of assembly, a double ring-shaped homohexamer of HslV is capped on each side by a ring-shaped HslU homohexamer. The assembly of the HslU/HslV complex is dependent on binding of ATP.

The protein resides in the cytoplasm. In terms of biological role, ATPase subunit of a proteasome-like degradation complex; this subunit has chaperone activity. The binding of ATP and its subsequent hydrolysis by HslU are essential for unfolding of protein substrates subsequently hydrolyzed by HslV. HslU recognizes the N-terminal part of its protein substrates and unfolds these before they are guided to HslV for hydrolysis. The protein is ATP-dependent protease ATPase subunit HslU of Haemophilus influenzae (strain 86-028NP).